A 586-amino-acid polypeptide reads, in one-letter code: Transmembrane protease serine 13 (586 aa).

Disordered stretches follow at residues M1–S115 and P131–F157. At M1–Q165 the chain is on the cytoplasmic side. The 1-1 repeat unit spans residues A9–R13. Residues A9–L93 form a 13 X 5 AA repeats of A-S-P-A-[GLQR] region. The stretch at T14–G18 is one 2-1; approximate repeat. The segment covering T14 to G52 has biased composition (low complexity). Positions T14–R68 are 4 X 5 AA repeats of T-P-P-G-R. Tandem repeats lie at residues A19 to Q23, A24 to G28, T29 to R33, A34 to Q38, A39 to Q43, A44 to G48, T49 to R53, A54 to Q58, A59 to G63, and T64 to R68. The stretch at A69 to Q78 is one 1-9; approximate repeat. Low complexity-rich tracts occupy residues A69–S111 and R133–R144. 3 tandem repeats follow at residues A79–Q83, A84–R88, and A89–L93. The chain crosses the membrane as a helical; Signal-anchor for type II membrane protein span at residues L166–F186. Residues Q187–L586 are Extracellular-facing. The SRCR domain maps to I195–R325. The region spanning C204–C226 is the LDL-receptor class A domain. 3 cysteine pairs are disulfide-bonded: C250–C314, C263–C317, and C351–C367. N-linked (GlcNAc...) asparagine glycosylation is found at N255 and N292. One can recognise a Peptidase S1 domain in the interval I326 to E559. Catalysis depends on H366, which acts as the Charge relay system. Residue N405 is glycosylated (N-linked (GlcNAc...) asparagine). Residue D414 is the Charge relay system of the active site. The N-linked (GlcNAc...) asparagine glycan is linked to N445. 3 disulfide bridges follow: C448/C517, C480/C496, and C507/C535. The Charge relay system role is filled by S511. The segment covering Q565–T574 has biased composition (polar residues). Positions Q565–L586 are disordered. Gly residues predominate over residues S575–L586.

Belongs to the peptidase S1 family. In terms of assembly, interacts with SPINT1/HAI-1; the interaction promotes the phosphorylation and cell membrane localization of TMPRSS13. Interacts with SPINT2/HAI-2; the interaction promotes the phosphorylation and cell membrane localization of TMPRSS13. In terms of processing, the inactive zymogen is post-translationally modified and then trafficked to the cell surface, whereby it undergoes autocatalytic cleavage resulting in an activated form that is released extracellularly. Post-translationally, phosphorylation is required for localization at the cell surface. Phosphorylation increases following inhibition of protease activity by SPINT2/HAI-2. N-glycosylation of Asn-405 and Asn-445 is required for exit from the endoplasmic reticulum and trafficking to the cell surface. Also required for autocleavage of the zymogen, activation and secretion of the mature protein. Expressed in placenta. As to expression, predominantly expressed in lung, placenta, pancreas, and prostate. In terms of tissue distribution, expressed in lung, placenta, pancreas, and prostate. Weakly expressed in testis and peripheral blood lymphocytes.

It is found in the cell membrane. The protein localises to the secreted. Its subcellular location is the cytoplasm. Its activity is regulated as follows. Cleavage of HGF is inhibited by SPINT1/HAI-1 via the BPTI/Kunitz inhibitor 1 domain. Serine protease. Cleaves the proform of PRSS8/prostasin to form the active protein. Cleaves the proform of HGF to form the active protein which promotes MAPK signaling. Promotes the formation of the stratum corneum and subsequently the epidermal barrier in embryos. The polypeptide is Transmembrane protease serine 13 (TMPRSS13) (Homo sapiens (Human)).